The chain runs to 130 residues: Riboflavin kinase (130 aa).

10–15 (GFGEGK) is a CDP binding site. Residues threonine 39 and asparagine 41 each contribute to the Mg(2+) site. FMN-binding residues include threonine 96 and glutamate 104. CDP is bound at residue 109 to 112 (VNLR).

This sequence belongs to the archaeal riboflavin kinase family. The cofactor is Mg(2+).

The catalysed reaction is riboflavin + CTP = CDP + FMN + H(+). It participates in cofactor biosynthesis; FMN biosynthesis; FMN from riboflavin (CTP route): step 1/1. Catalyzes the CTP-dependent phosphorylation of riboflavin (vitamin B2) to form flavin mononucleotide (FMN). The sequence is that of Riboflavin kinase from Methanococcus vannielii (strain ATCC 35089 / DSM 1224 / JCM 13029 / OCM 148 / SB).